We begin with the raw amino-acid sequence, 537 residues long: Methylmalonate-semialdehyde/malonate-semialdehyde dehydrogenase [acylating], mitochondrial (537 aa).

Residues 1–34 constitute a mitochondrion transit peptide; it reads MAAVAVAAAAAALRARILQVSSKVNSSWQPASSF. An N6-acetyllysine; alternate mark is found at K49, K54, K57, and K78. N6-succinyllysine; alternate is present on residues K49, K54, K57, and K78. Position 89 is an N6-acetyllysine (K89). K119 and K131 each carry N6-acetyllysine; alternate. N6-succinyllysine; alternate occurs at positions 119 and 131. NAD(+)-binding residues include A185, F187, K211, E214, R215, and S264. S264 carries the post-translational modification Phosphoserine. K300 is modified (N6-acetyllysine). The active-site Nucleophile is C319. Residues K332 and K333 each carry the N6-acetyllysine modification. 2 positions are modified to N6-acetyllysine; alternate: K366 and K378. N6-succinyllysine; alternate occurs at positions 366 and 378. S382 is subject to Phosphoserine. K393 bears the N6-succinyllysine mark. Position 419 (E419) interacts with NAD(+). An N6-acetyllysine modification is found at K502. K519 bears the N6-succinyllysine mark.

It belongs to the aldehyde dehydrogenase family. As to quaternary structure, homodimer. In terms of processing, the N-terminus is blocked.

It is found in the mitochondrion. It carries out the reaction 2-methyl-3-oxopropanoate + NAD(+) + CoA + H2O = propanoyl-CoA + hydrogencarbonate + NADH + H(+). The catalysed reaction is 3-oxopropanoate + NAD(+) + CoA + H2O = hydrogencarbonate + acetyl-CoA + NADH + H(+). It catalyses the reaction (R)-2-methyl-3-oxopropanoate + NAD(+) + CoA + H2O = propanoyl-CoA + hydrogencarbonate + NADH + H(+). The enzyme catalyses (S)-2-methyl-3-oxopropanoate + NAD(+) + CoA + H2O = propanoyl-CoA + hydrogencarbonate + NADH + H(+). Functionally, malonate and methylmalonate semialdehyde dehydrogenase involved in the catabolism of valine, thymine, and compounds catabolized by way of beta-alanine, including uracil and cytidine. The chain is Methylmalonate-semialdehyde/malonate-semialdehyde dehydrogenase [acylating], mitochondrial (ALDH6A1) from Bos taurus (Bovine).